We begin with the raw amino-acid sequence, 244 residues long: Thiol S-methyltransferase TMT1B (244 aa).

The first 23 residues, 1-23, serve as a signal peptide directing secretion; it reads MDVLVPLLQLLVLLLTLPLHLLA.

This sequence belongs to the methyltransferase superfamily. In terms of tissue distribution, highly expressed in liver and kidney. No expression in testis, heart, lung, brain, spleen or cultured fibroblasts.

It is found in the endoplasmic reticulum membrane. The protein resides in the lipid droplet. The protein localises to the microsome. It localises to the cytoplasm. Its subcellular location is the cytosol. The enzyme catalyses a thiol + S-adenosyl-L-methionine = a methyl thioether + S-adenosyl-L-homocysteine + H(+). Thiol S-methyltransferase that catalyzes the transfer of a methyl group from S-adenosyl-L-methionine to alkyl and phenolic thiol-containing acceptor substrates. Together with TMT1B accounts for most of S-thiol methylation activity in the endoplasmic reticulum of hepatocytes. Selectively methylates S-centered nucleophiles from metabolites such as hydrogen sulfide and dithiothreitol. This is Thiol S-methyltransferase TMT1B (Tmt1b) from Rattus norvegicus (Rat).